A 346-amino-acid chain; its full sequence is Histone PARylation factor 1 (346 aa).

N-acetylmethionine is present on M1. Positions 1–10 are enriched in basic residues; that stretch reads MVGGGAKRRL. A disordered region spans residues 1–29; that stretch reads MVGGGAKRRLRGEGPQCEKPVDMKKSKSC. An N6-acetyllysine modification is found at K19. The segment covering 19 to 29 has biased composition (basic and acidic residues); the sequence is KPVDMKKSKSC. S97 is subject to ADP-ribosylserine. 2 positions are modified to N6-acetyllysine: K186 and K233. At D235 the chain carries PolyADP-ribosyl aspartic acid. An ADP-ribosyltyrosine modification is found at Y238. E240 is subject to PolyADP-ribosyl glutamic acid. The interval 242-346 is interaction with PARP1; the sequence is PETDASLRRI…SQDDVDQLAA (105 aa). Residue E284 is the Proton donor of the active site.

The protein belongs to the HPF1 family. In terms of assembly, interacts with PARP1 (via the PARP catalytic domain). Interacts with PARP2 (via the PARP catalytic domain). Interacts with core nucleosomes in a PARP1- and PARP2-dependent manner.

The protein localises to the chromosome. Its subcellular location is the nucleus. Its function is as follows. Cofactor for serine ADP-ribosylation that confers serine specificity on PARP1 and PARP2 and plays a key role in DNA damage response. Initiates the repair of double-strand DNA breaks: recruited to DNA damage sites by PARP1 and PARP2 and switches the amino acid specificity of PARP1 and PARP2 from aspartate or glutamate to serine residues, licensing serine ADP-ribosylation of target proteins. Serine ADP-ribosylation of target proteins, such as histones, promotes decompaction of chromatin and the recruitment of repair factors leading to the reparation of DNA strand breaks. Serine ADP-ribosylation of proteins constitutes the primary form of ADP-ribosylation of proteins in response to DNA damage. HPF1 acts by completing the active site of PARP1 and PARP2: forms a composite active site composed of residues from HPF1 and PARP1 or PARP2. While HPF1 promotes the initiation of serine ADP-ribosylation, it restricts the polymerase activity of PARP1 and PARP2 in order to limit the length of poly-ADP-ribose chains. HPF1 also promotes tyrosine ADP-ribosylation, probably by conferring tyrosine specificity on PARP1. The polypeptide is Histone PARylation factor 1 (Bos taurus (Bovine)).